Reading from the N-terminus, the 126-residue chain is Small ribosomal subunit protein uS13 (126 aa).

The tract at residues 95-126 is disordered; sequence NLPVHGQRTHTNARTRKGPRRAIAGKKKAGKK.

The protein belongs to the universal ribosomal protein uS13 family. Part of the 30S ribosomal subunit. Forms a loose heterodimer with protein S19. Forms two bridges to the 50S subunit in the 70S ribosome.

Its function is as follows. Located at the top of the head of the 30S subunit, it contacts several helices of the 16S rRNA. In the 70S ribosome it contacts the 23S rRNA (bridge B1a) and protein L5 of the 50S subunit (bridge B1b), connecting the 2 subunits; these bridges are implicated in subunit movement. Contacts the tRNAs in the A and P-sites. The chain is Small ribosomal subunit protein uS13 from Frankia casuarinae (strain DSM 45818 / CECT 9043 / HFP020203 / CcI3).